The chain runs to 522 residues: ARS-binding protein 1 (522 aa).

One can recognise an HTH CENPB-type domain in the interval 70–144; sequence DVKRNRPPKY…RKRHILHAIN (75 aa). Thr460 carries the phosphothreonine modification.

In terms of assembly, interacts with mcm10.

The protein resides in the nucleus. Binds, preferentially, to the Maundrell ARS consensus sequence within ARS3002. The chain is ARS-binding protein 1 (abp1) from Schizosaccharomyces pombe (strain 972 / ATCC 24843) (Fission yeast).